A 317-amino-acid chain; its full sequence is Olfactory receptor 6Q1 (317 aa).

Topologically, residues 1–27 are extracellular; that stretch reads MQPYTKNWTQVTEFVMMGFAGIHEAHL. The N-linked (GlcNAc...) asparagine glycan is linked to Asn-7. A helical membrane pass occupies residues 28–48; the sequence is LFFILFLTMYLFTLVENLAII. The Cytoplasmic segment spans residues 49-56; sequence LVVGLDHR. Residues 57–77 form a helical membrane-spanning segment; that stretch reads LRRPMYFFLTHLSCLEIWYTS. Residues 78-103 lie on the Extracellular side of the membrane; it reads VTVPKMLAGFIGVDGGKNISYADCLS. N-linked (GlcNAc...) asparagine glycosylation occurs at Asn-95. An intrachain disulfide couples Cys-101 to Cys-193. Residues 104–124 form a helical membrane-spanning segment; sequence QLFIFTFLGATECFLLAAMAY. Over 125 to 143 the chain is Cytoplasmic; that stretch reads DRYVAICMPLHYGAFVSWG. The helical transmembrane segment at 144–164 threads the bilayer; that stretch reads TCIRLAAACWLVGFLTPILPI. Residues 165-201 lie on the Extracellular side of the membrane; it reads YLLSQLTFYGPNVIDHFSCDASPLLALSCSDVTWKET. The helical transmembrane segment at 202–221 threads the bilayer; it reads VDFLVSLAVLLASSMVIAVS. The Cytoplasmic portion of the chain corresponds to 222-241; the sequence is YGNIVWTLLHIRSAAERWKA. The chain crosses the membrane as a helical span at residues 242–262; that stretch reads FSTCAAHLTVVSLFYGTLFFM. The Extracellular segment spans residues 263 to 275; it reads YVQTKVTSSINFN. A helical transmembrane segment spans residues 276–296; the sequence is KVVSVFYSVVTPMLNPLIYSL. The Cytoplasmic segment spans residues 297 to 317; the sequence is RNKEVKGALGRVFSLNFWKGQ.

This sequence belongs to the G-protein coupled receptor 1 family.

It localises to the cell membrane. Odorant receptor. This is Olfactory receptor 6Q1 (OR6Q1) from Homo sapiens (Human).